The sequence spans 609 residues: DNA mismatch repair protein MutL (609 aa).

It belongs to the DNA mismatch repair MutL/HexB family.

This protein is involved in the repair of mismatches in DNA. It is required for dam-dependent methyl-directed DNA mismatch repair. May act as a 'molecular matchmaker', a protein that promotes the formation of a stable complex between two or more DNA-binding proteins in an ATP-dependent manner without itself being part of a final effector complex. This is DNA mismatch repair protein MutL from Rickettsia felis (strain ATCC VR-1525 / URRWXCal2) (Rickettsia azadi).